We begin with the raw amino-acid sequence, 395 residues long: D-alanine--D-alanine ligase (395 aa).

An ATP-grasp domain is found at 172–391; it reads KVVLDAAGIP…YTELITRLIE (220 aa). 204–266 is an ATP binding site; that stretch reads DAGLTYPLFV…EQGIDGREIE (63 aa). The Mg(2+) site is built by aspartate 345, glutamate 358, and asparagine 360.

Belongs to the D-alanine--D-alanine ligase family. It depends on Mg(2+) as a cofactor. Mn(2+) serves as cofactor.

The protein resides in the cytoplasm. The catalysed reaction is 2 D-alanine + ATP = D-alanyl-D-alanine + ADP + phosphate + H(+). The protein operates within cell wall biogenesis; peptidoglycan biosynthesis. In terms of biological role, cell wall formation. The sequence is that of D-alanine--D-alanine ligase from Bifidobacterium longum (strain DJO10A).